The sequence spans 243 residues: BTB/POZ domain-containing protein At4g08455 (243 aa).

The stretch at 19-51 (KECYVEAGETEEELKREIDDLKAKVAFLRLSSS) forms a coiled coil. Residues 64–136 (TDVVLIASED…LYTAEACLDE (73 aa)) form the BTB domain.

In terms of assembly, interacts with CUL3A and CUL3B.

The protein operates within protein modification; protein ubiquitination. May act as a substrate-specific adapter of an E3 ubiquitin-protein ligase complex (CUL3-RBX1-BTB) which mediates the ubiquitination and subsequent proteasomal degradation of target proteins. The polypeptide is BTB/POZ domain-containing protein At4g08455 (Arabidopsis thaliana (Mouse-ear cress)).